We begin with the raw amino-acid sequence, 1411 residues long: Regulating synaptic membrane exocytosis protein 2 (1411 aa).

Positions 1-33 (MSAPVGPRGRLAPIPAASQPPLQPEMPDLSHLT) are disordered. In terms of domain architecture, RabBD spans 26-185 (MPDLSHLTEE…TKSGAWFYNS (160 aa)). An FYVE-type zinc finger spans residues 117–173 (KGDAPTCGICHKTKFADGCGHNCSYCQTKFCARCGGRVSLRSNKVMWVCNLCRKQQE). Zn(2+) contacts are provided by cysteine 123, cysteine 126, cysteine 139, cysteine 142, cysteine 147, cysteine 150, cysteine 165, and cysteine 168. Composition is skewed to basic and acidic residues over residues 203–216 (NEEA…KLHE), 273–287 (DQNR…REEY), 318–329 (DSDHLSYRDSNR), 348–366 (RDEY…RYRS), 382–401 (EQMR…RHSD), and 410–434 (EDSR…RRAA). Disordered stretches follow at residues 203-598 (NEEA…SERQ) and 623-650 (SGVD…WQPS). Position 400 is a phosphoserine (serine 400). A compositionally biased stretch (polar residues) spans 451 to 463 (GPSSYAQRTTNHS). Over residues 475-492 (DRPDLRRTDSLRKQHHLD) the composition is skewed to basic and acidic residues. Residues 510–521 (RNDSLSSDQSES) show a composition bias toward polar residues. The span at 528–537 (KPHKSKKGGK) shows a compositional bias: basic residues. The segment covering 558–568 (SCDDVEIESES) has biased composition (acidic residues). Basic and acidic residues-rich tracts occupy residues 569–583 (VSEK…RKTS) and 634–644 (NEEHSHSDKHP). The PDZ domain maps to 668 to 754 (DGSVPRDSGA…EPQVELVVSR (87 aa)). Phosphothreonine is present on threonine 689. Residues 762–793 (IPDSTHAQLESSSSSFESQKMDRPSISVTSPM) form a disordered region. Serine 791 and serine 794 each carry phosphoserine. The C2 1 domain maps to 805 to 928 (LSGQLSIKLW…ALLDDEPHWY (124 aa)). Disordered regions lie at residues 939-973 (PLPH…SEVS) and 993-1190 (DLQS…STET). Polar residues-rich tracts occupy residues 994 to 1015 (LQSS…SPSG) and 1049 to 1059 (RTMTGHYNTIS). Positions 1060–1113 (RMDRHRVMDDHYSPDRDRDCEAADRQPYHRSRSTEQRPLLERTTTRSRSTERPD) are enriched in basic and acidic residues. Residues 1143 to 1153 (GSVQTSPSSTP) are compositionally biased toward polar residues. Position 1148 is a phosphoserine (serine 1148). A C2 2 domain is found at 1257–1375 (AMGDIQVGMM…ELSNMVIGWF (119 aa)). Phosphoserine occurs at positions 1396 and 1399.

As to quaternary structure, interacts with RAB3A and RAB3B that have been activated by GTP-binding. Interacts with RAB3C, RAB3D and RAB26. Interacts with TSPOAP1 and RIMBP2. Interacts with PPFIA3 and PPFIA4. Interacts via its zinc finger with the first C2 domain of UNC13A. Forms a complex consisting of UNC13A, RIMS2 and RAB3A. Heterodimer with PCLO. Part of a ternary complex involving PCLO and EPAC2. As to expression, widely expressed. Expressed in melanocytes. In fetal tissues, predominantly expressed in the brain. In the retina, expressed in the outer plexiform layer (at protein level). In the cerebellum, expressed in Purkinje cells (at protein level). In the pancreas, expressed in Langerhans islets (at protein level).

The protein resides in the cell membrane. It localises to the synapse. The protein localises to the presynaptic cell membrane. Rab effector involved in exocytosis. May act as scaffold protein. Plays a role in dendrite formation by melanocytes. This Homo sapiens (Human) protein is Regulating synaptic membrane exocytosis protein 2 (RIMS2).